Consider the following 102-residue polypeptide: Small ribosomal subunit protein uS10 (102 aa).

The protein belongs to the universal ribosomal protein uS10 family. As to quaternary structure, part of the 30S ribosomal subunit.

Involved in the binding of tRNA to the ribosomes. The chain is Small ribosomal subunit protein uS10 from Methanoculleus marisnigri (strain ATCC 35101 / DSM 1498 / JR1).